The chain runs to 72 residues: UPF0729 protein C18orf32 homolog (72 aa).

The necessary for its localzation to the endoplasmic reticulum and lipid droplets stretch occupies residues 1–33 (MVCIPCIVIPVLLWIFKKFLEPYIYPVVSRIWP). Positions 45-72 (TGKVDCKGADTNGFSTKGPTEVSDKKKD) are disordered.

It belongs to the UPF0729 family. As to quaternary structure, interacts with DERL1 and AMFR. In terms of processing, undergoes ER-associated degradation (ERAD).

Its subcellular location is the endoplasmic reticulum. It localises to the lipid droplet. Its function is as follows. May activate the NF-kappa-B signaling pathway. The polypeptide is UPF0729 protein C18orf32 homolog (Rattus norvegicus (Rat)).